A 938-amino-acid polypeptide reads, in one-letter code: Phosphoenolpyruvate carboxylase (938 aa).

Residues H151 and K591 contribute to the active site.

This sequence belongs to the PEPCase type 1 family. The cofactor is Mg(2+).

The enzyme catalyses oxaloacetate + phosphate = phosphoenolpyruvate + hydrogencarbonate. Its function is as follows. Forms oxaloacetate, a four-carbon dicarboxylic acid source for the tricarboxylic acid cycle. This Roseiflexus castenholzii (strain DSM 13941 / HLO8) protein is Phosphoenolpyruvate carboxylase.